The primary structure comprises 469 residues: Glutamate--tRNA ligase (469 aa).

A 'HIGH' region motif is present at residues 11–21 (PSPTGFIHLGN). The 'KMSKS' region signature appears at 243–247 (KMSKR). K246 provides a ligand contact to ATP.

The protein belongs to the class-I aminoacyl-tRNA synthetase family. Glutamate--tRNA ligase type 1 subfamily. In terms of assembly, monomer.

The protein localises to the cytoplasm. The catalysed reaction is tRNA(Glu) + L-glutamate + ATP = L-glutamyl-tRNA(Glu) + AMP + diphosphate. Catalyzes the attachment of glutamate to tRNA(Glu) in a two-step reaction: glutamate is first activated by ATP to form Glu-AMP and then transferred to the acceptor end of tRNA(Glu). The protein is Glutamate--tRNA ligase of Burkholderia orbicola (strain AU 1054).